The chain runs to 198 residues: Type 1 fimbriae regulatory protein FimE (198 aa).

Residues 2 to 184 (SKRRYLTGKE…NAARFAGLWE (183 aa)) form the Tyr recombinase domain. Residues R41, K66, H136, R139, and H162 contribute to the active site. The active-site O-(3'-phospho-DNA)-tyrosine intermediate is the Y171.

Belongs to the 'phage' integrase family.

In terms of biological role, fimE is one of the 2 regulatory proteins which control the phase variation of type 1 fimbriae in E.coli. These proteins mediate the periodic inversion of a 300bp DNA segment that harbors the promoter for the fimbrial structural gene, fimA. FimE switches fimA off. The sequence is that of Type 1 fimbriae regulatory protein FimE (fimE) from Escherichia coli O6:H1 (strain CFT073 / ATCC 700928 / UPEC).